A 149-amino-acid chain; its full sequence is MPRPPICRRVEFLPGVTYFKPAAVPLRELEEVVLAVEELEAIRLKDKEGLEQEDCAARMGVSRPTFVRILNSARDKVADALVNGKAIRVEGGYYHLVGPKVRCRRCGHEWEPEQGGKEACPRCGSEELAGRGPGRGRCHRHGRFGEGEH.

The tract at residues 129–149 (AGRGPGRGRCHRHGRFGEGEH) is disordered.

This sequence belongs to the UPF0251 family.

The polypeptide is UPF0251 protein Moth_1655 (Moorella thermoacetica (strain ATCC 39073 / JCM 9320)).